The chain runs to 214 residues: Rhodanese-like domain-containing protein 10 (214 aa).

Residues 58–182 (ASEGYILLDV…VSEGDFPEIE (125 aa)) form the Rhodanese domain. C142 serves as the catalytic Cysteine persulfide intermediate. The chain crosses the membrane as a helical span at residues 190 to 206 (ATIGGVSFYLLKLLVLL).

The protein localises to the membrane. The protein is Rhodanese-like domain-containing protein 10 (STR10) of Arabidopsis thaliana (Mouse-ear cress).